Here is a 465-residue protein sequence, read N- to C-terminus: Chromosomal replication initiator protein DnaA (465 aa).

The domain I, interacts with DnaA modulators stretch occupies residues 1 to 72 (MRTKQLWQVA…ETLSLLLGRP (72 aa)). Residues 72–117 (PIAVHFTVHGQDDEEHPVQRRPQRRALASEEGSASKQLSLTPSPEH) are domain II. Positions 80–118 (HGQDDEEHPVQRRPQRRALASEEGSASKQLSLTPSPEHG) are disordered. A compositionally biased stretch (polar residues) spans 103–113 (GSASKQLSLTP). The interval 118-334 (GLNPRYTFEK…GALNRIVALA (217 aa)) is domain III, AAA+ region. The ATP site is built by Gly-162, Gly-164, Lys-165, and Thr-166. A domain IV, binds dsDNA region spans residues 335 to 465 (QLTHQPITLA…DAKAPLASRH (131 aa)).

The protein belongs to the DnaA family. Oligomerizes as a right-handed, spiral filament on DNA at oriC.

It is found in the cytoplasm. Functionally, plays an essential role in the initiation and regulation of chromosomal replication. ATP-DnaA binds to the origin of replication (oriC) to initiate formation of the DNA replication initiation complex once per cell cycle. Binds the DnaA box (a 9 base pair repeat at the origin) and separates the double-stranded (ds)DNA. Forms a right-handed helical filament on oriC DNA; dsDNA binds to the exterior of the filament while single-stranded (ss)DNA is stabiized in the filament's interior. The ATP-DnaA-oriC complex binds and stabilizes one strand of the AT-rich DNA unwinding element (DUE), permitting loading of DNA polymerase. After initiation quickly degrades to an ADP-DnaA complex that is not apt for DNA replication. Binds acidic phospholipids. The protein is Chromosomal replication initiator protein DnaA of Thermomicrobium roseum (strain ATCC 27502 / DSM 5159 / P-2).